The primary structure comprises 383 residues: Acetylornithine deacetylase (383 aa).

Residue H80 coordinates Zn(2+). Residue D82 is part of the active site. D112 contacts Zn(2+). Residue E144 is part of the active site. The Zn(2+) site is built by E145, E169, and H355.

Belongs to the peptidase M20A family. ArgE subfamily. As to quaternary structure, homodimer. The cofactor is Zn(2+). Requires Co(2+) as cofactor. Glutathione serves as cofactor.

It is found in the cytoplasm. The enzyme catalyses N(2)-acetyl-L-ornithine + H2O = L-ornithine + acetate. It participates in amino-acid biosynthesis; L-arginine biosynthesis; L-ornithine from N(2)-acetyl-L-ornithine (linear): step 1/1. Functionally, catalyzes the hydrolysis of the amide bond of N(2)-acetylated L-amino acids. Cleaves the acetyl group from N-acetyl-L-ornithine to form L-ornithine, an intermediate in L-arginine biosynthesis pathway, and a branchpoint in the synthesis of polyamines. The chain is Acetylornithine deacetylase from Shigella boydii serotype 18 (strain CDC 3083-94 / BS512).